Consider the following 491-residue polypeptide: Ketol-acid reductoisomerase (NADP(+)) (491 aa).

The KARI N-terminal Rossmann domain maps to 15–208 (AQLGKCRFMG…GGHRAGVLES (194 aa)). NADP(+)-binding positions include 45-48 (CGAQ), Arg-68, Arg-76, Ser-78, and 108-110 (DKQ). Residue His-132 is part of the active site. Gly-158 lines the NADP(+) pocket. KARI C-terminal knotted domains follow at residues 209–344 (SFVA…TAPQ) and 345–484 (YEGK…MTDM). Mg(2+) contacts are provided by Asp-217, Glu-221, Glu-389, and Glu-393. Ser-414 contacts substrate.

Belongs to the ketol-acid reductoisomerase family. Mg(2+) is required as a cofactor.

It catalyses the reaction (2R)-2,3-dihydroxy-3-methylbutanoate + NADP(+) = (2S)-2-acetolactate + NADPH + H(+). The catalysed reaction is (2R,3R)-2,3-dihydroxy-3-methylpentanoate + NADP(+) = (S)-2-ethyl-2-hydroxy-3-oxobutanoate + NADPH + H(+). It participates in amino-acid biosynthesis; L-isoleucine biosynthesis; L-isoleucine from 2-oxobutanoate: step 2/4. The protein operates within amino-acid biosynthesis; L-valine biosynthesis; L-valine from pyruvate: step 2/4. Functionally, involved in the biosynthesis of branched-chain amino acids (BCAA). Catalyzes an alkyl-migration followed by a ketol-acid reduction of (S)-2-acetolactate (S2AL) to yield (R)-2,3-dihydroxy-isovalerate. In the isomerase reaction, S2AL is rearranged via a Mg-dependent methyl migration to produce 3-hydroxy-3-methyl-2-ketobutyrate (HMKB). In the reductase reaction, this 2-ketoacid undergoes a metal-dependent reduction by NADPH to yield (R)-2,3-dihydroxy-isovalerate. The protein is Ketol-acid reductoisomerase (NADP(+)) of Escherichia coli (strain 55989 / EAEC).